The chain runs to 483 residues: ATP synthase subunit beta (483 aa).

162–169 serves as a coordination point for ATP; sequence GGAGVGKT.

The protein belongs to the ATPase alpha/beta chains family. In terms of assembly, F-type ATPases have 2 components, CF(1) - the catalytic core - and CF(0) - the membrane proton channel. CF(1) has five subunits: alpha(3), beta(3), gamma(1), delta(1), epsilon(1). CF(0) has four main subunits: a(1), b(1), b'(1) and c(9-12).

Its subcellular location is the cellular thylakoid membrane. It carries out the reaction ATP + H2O + 4 H(+)(in) = ADP + phosphate + 5 H(+)(out). In terms of biological role, produces ATP from ADP in the presence of a proton gradient across the membrane. The catalytic sites are hosted primarily by the beta subunits. This is ATP synthase subunit beta from Prochloron didemni.